The primary structure comprises 285 residues: Putative cytochrome c peroxidase, mitochondrial (285 aa).

Residue His37 is the Proton acceptor of the active site. Heme b is bound at residue His161. Residue Trp177 is the Tryptophan radical intermediate of the active site.

The protein belongs to the peroxidase family. Cytochrome c peroxidase subfamily. As to quaternary structure, forms a one-to-one complex with cytochrome c. It depends on heme b as a cofactor.

It localises to the mitochondrion matrix. It is found in the mitochondrion intermembrane space. The catalysed reaction is 2 Fe(II)-[cytochrome c] + H2O2 + 2 H(+) = 2 Fe(III)-[cytochrome c] + 2 H2O. Destroys radicals which are normally produced within the cells and which are toxic to biological systems. The polypeptide is Putative cytochrome c peroxidase, mitochondrial (Yarrowia lipolytica (strain CLIB 122 / E 150) (Yeast)).